Here is a 382-residue protein sequence, read N- to C-terminus: Putative oxidoreductase C1F5.03c (382 aa).

A helical transmembrane segment spans residues 7–27 (IVIVGGGITGVSCLYFLAHHP).

It belongs to the TDA3 family.

Its subcellular location is the cytoplasm. It is found in the membrane. Its function is as follows. Putative oxidoreductase that negatively regulates the retrieval of cargo from late endosomes to the Golgi. This is Putative oxidoreductase C1F5.03c from Schizosaccharomyces pombe (strain 972 / ATCC 24843) (Fission yeast).